The following is a 445-amino-acid chain: UPF0210 protein SPJ_0248 (445 aa).

Belongs to the UPF0210 family. As to quaternary structure, homodimer.

The sequence is that of UPF0210 protein SPJ_0248 from Streptococcus pneumoniae (strain JJA).